The sequence spans 55 residues: Large ribosomal subunit protein bL33 (55 aa).

Belongs to the bacterial ribosomal protein bL33 family.

This Azoarcus sp. (strain BH72) protein is Large ribosomal subunit protein bL33.